The following is a 662-amino-acid chain: Bifunctional polymyxin resistance protein ArnA (662 aa).

The segment at 1 to 307 is formyltransferase ArnAFT; that stretch reads MTSKAVVFAY…ELGLVEGARL (307 aa). His-106 serves as the catalytic Proton donor; for formyltransferase activity. (6R)-10-formyltetrahydrofolate contacts are provided by residues Arg-116 and 138–142; that span reads IERAD. Residues 316-662 are dehydrogenase ArnADH; it reads RRTRVLILGV…EALREREAQA (347 aa). NAD(+)-binding positions include Asp-349 and 370-371; that span reads DI. UDP-alpha-D-glucuronate is bound by residues Ala-395, Tyr-400, and 434-435; that span reads TS. Glu-436 serves as the catalytic Proton acceptor; for decarboxylase activity. UDP-alpha-D-glucuronate-binding positions include Arg-462, Asn-493, 527 to 536, and Tyr-614; that span reads RLVDGGAQKR. The Proton donor; for decarboxylase activity role is filled by Arg-620.

The protein in the N-terminal section; belongs to the Fmt family. UDP-L-Ara4N formyltransferase subfamily. It in the C-terminal section; belongs to the NAD(P)-dependent epimerase/dehydratase family. UDP-glucuronic acid decarboxylase subfamily. Homohexamer, formed by a dimer of trimers.

The enzyme catalyses UDP-alpha-D-glucuronate + NAD(+) = UDP-beta-L-threo-pentopyranos-4-ulose + CO2 + NADH. It carries out the reaction UDP-4-amino-4-deoxy-beta-L-arabinose + (6R)-10-formyltetrahydrofolate = UDP-4-deoxy-4-formamido-beta-L-arabinose + (6S)-5,6,7,8-tetrahydrofolate + H(+). It participates in nucleotide-sugar biosynthesis; UDP-4-deoxy-4-formamido-beta-L-arabinose biosynthesis; UDP-4-deoxy-4-formamido-beta-L-arabinose from UDP-alpha-D-glucuronate: step 1/3. The protein operates within nucleotide-sugar biosynthesis; UDP-4-deoxy-4-formamido-beta-L-arabinose biosynthesis; UDP-4-deoxy-4-formamido-beta-L-arabinose from UDP-alpha-D-glucuronate: step 3/3. Its pathway is bacterial outer membrane biogenesis; lipopolysaccharide biosynthesis. In terms of biological role, bifunctional enzyme that catalyzes the oxidative decarboxylation of UDP-glucuronic acid (UDP-GlcUA) to UDP-4-keto-arabinose (UDP-Ara4O) and the addition of a formyl group to UDP-4-amino-4-deoxy-L-arabinose (UDP-L-Ara4N) to form UDP-L-4-formamido-arabinose (UDP-L-Ara4FN). The modified arabinose is attached to lipid A and is required for resistance to polymyxin and cationic antimicrobial peptides. The sequence is that of Bifunctional polymyxin resistance protein ArnA from Pseudomonas aeruginosa (strain ATCC 15692 / DSM 22644 / CIP 104116 / JCM 14847 / LMG 12228 / 1C / PRS 101 / PAO1).